The primary structure comprises 526 residues: Sterol 14-alpha demethylase CYP51A (526 aa).

The helical transmembrane segment at 27-47 (IGFAVFLVLSVVLNVLNQLLF) threads the bilayer. Tyrosine 123 is a binding site for lanosterol. Cysteine 470 provides a ligand contact to heme.

Belongs to the cytochrome P450 family. Requires heme as cofactor.

It is found in the endoplasmic reticulum membrane. The catalysed reaction is a 14alpha-methyl steroid + 3 reduced [NADPH--hemoprotein reductase] + 3 O2 = a Delta(14) steroid + formate + 3 oxidized [NADPH--hemoprotein reductase] + 4 H2O + 4 H(+). It carries out the reaction a 14alpha-methyl steroid + reduced [NADPH--hemoprotein reductase] + O2 = a 14alpha-hydroxymethyl steroid + oxidized [NADPH--hemoprotein reductase] + H2O + H(+). The enzyme catalyses a 14alpha-hydroxymethyl steroid + reduced [NADPH--hemoprotein reductase] + O2 = a 14alpha-formyl steroid + oxidized [NADPH--hemoprotein reductase] + 2 H2O + H(+). It catalyses the reaction a 14alpha-formyl steroid + reduced [NADPH--hemoprotein reductase] + O2 = a Delta(14) steroid + formate + oxidized [NADPH--hemoprotein reductase] + H2O + 2 H(+). The catalysed reaction is lanosterol + 3 reduced [NADPH--hemoprotein reductase] + 3 O2 = 4,4-dimethyl-5alpha-cholesta-8,14,24-trien-3beta-ol + formate + 3 oxidized [NADPH--hemoprotein reductase] + 4 H2O + 4 H(+). It carries out the reaction lanosterol + reduced [NADPH--hemoprotein reductase] + O2 = 32-hydroxylanosterol + oxidized [NADPH--hemoprotein reductase] + H2O + H(+). The enzyme catalyses 32-hydroxylanosterol + reduced [NADPH--hemoprotein reductase] + O2 = 32-oxolanosterol + oxidized [NADPH--hemoprotein reductase] + 2 H2O + H(+). It catalyses the reaction 32-oxolanosterol + reduced [NADPH--hemoprotein reductase] + O2 = 4,4-dimethyl-5alpha-cholesta-8,14,24-trien-3beta-ol + formate + oxidized [NADPH--hemoprotein reductase] + H2O + 2 H(+). The catalysed reaction is eburicol + 3 reduced [NADPH--hemoprotein reductase] + 3 O2 = 14-demethyleburicol + formate + 3 oxidized [NADPH--hemoprotein reductase] + 4 H2O + 4 H(+). It carries out the reaction eburicol + reduced [NADPH--hemoprotein reductase] + O2 = 32-hydroxyeburicol + oxidized [NADPH--hemoprotein reductase] + H2O + H(+). The enzyme catalyses 32-hydroxyeburicol + reduced [NADPH--hemoprotein reductase] + O2 = 32-oxoeburicol + oxidized [NADPH--hemoprotein reductase] + 2 H2O + H(+). It catalyses the reaction 32-oxoeburicol + reduced [NADPH--hemoprotein reductase] + O2 = 14-demethyleburicol + formate + oxidized [NADPH--hemoprotein reductase] + H2O + 2 H(+). It functions in the pathway steroid metabolism; ergosterol biosynthesis. In terms of biological role, together with cyp51A and cyp51C, encodes the sterol 14alpha-demethylase that plays a critical role in the third module of ergosterol biosynthesis pathway, being ergosterol the major sterol component in fungal membranes that participates in a variety of functions. Essential for ascospore production. The third module or late pathway involves the ergosterol synthesis itself through consecutive reactions that mainly occur in the endoplasmic reticulum (ER) membrane. In filamentous fungi, during the initial step of this module, lanosterol (lanosta-8,24-dien-3beta-ol) can be metabolized to eburicol. Sterol 14alpha-demethylase catalyzes the three-step oxidative removal of the 14alpha-methyl group (C-32) of both these sterols in the form of formate, and converts eburicol and lanosterol to 14-demethyleburicol (4,4,24-trimethylergosta-8,14,24(28)-trienol) and 4,4-dimethyl-5alpha-cholesta-8,14,24-trien-3beta-ol, respectively, which are further metabolized by other enzymes in the pathway to ergosterol. Can also use substrates not intrinsic to fungi, such as 24,25-dihydrolanosterol (DHL), producing 4,4'-dimethyl-8,14-cholestadien-3-beta-ol, but at lower rates than the endogenous substrates. In Gibberella zeae (strain ATCC MYA-4620 / CBS 123657 / FGSC 9075 / NRRL 31084 / PH-1) (Wheat head blight fungus), this protein is Sterol 14-alpha demethylase CYP51A.